The primary structure comprises 214 residues: uncharacterized protein (214 aa).

A signal peptide spans 1–18; it reads MTMYIGLILVVLATFCQG. An N-linked (GlcNAc...) asparagine; by host glycan is attached at Asn64.

This is an uncharacterized protein from Magallana gigas (Pacific oyster).